The primary structure comprises 508 residues: RanBP-type and C3HC4-type zinc finger-containing protein 1 (508 aa).

The residue at position 1 (Met1) is an N-acetylmethionine. An interaction with IRF3 region spans residues 1–218; that stretch reads MDEKTKKAEE…PGCEMCCRAR (218 aa). The interaction with TAB2 stretch occupies residues 1–268; that stretch reads MDEKTKKAEE…NYLQHVQLEQ (268 aa). Ser50 is subject to Phosphoserine. The 65-residue stretch at 55–119 folds into the Ubiquitin-like domain; it reads IRLCVSVEDA…DQETLHSHGI (65 aa). Residues 69–131 are interaction with RNF31; it reads VTIWLTVRPD…NGDSAYLYLL (63 aa). A disordered region spans residues 161–191; sequence TLQPRGPLEPVLPKPRTHQETGQPDAAPESP. A RanBP2-type zinc finger spans residues 188–220; the sequence is PESPPVGWQCPGCTFINKPTRPGCEMCCRARPE. Positions 231–260 form a coiled coil; the sequence is DEEERARLAGEEEALRQYEQRKQQQQEGNY. Residues 276–504 form a TRIAD supradomain region; that stretch reads EPAECPVCYS…VNGIPCHPSC (229 aa). Zn(2+)-binding residues include Cys280, Cys283, Cys298, His300, Cys303, Cys306, and Cys321. The segment at 280 to 330 adopts an RING-type 1 zinc-finger fold; that stretch reads CPVCYSVLAPGEAVVLRECLHTFCRECLQGTIRNSQEAEVSCPFIDNTYSC. Position 328 is a phosphotyrosine (Tyr328). 11 residues coordinate Zn(2+): Cys330, Cys369, Cys374, Cys389, Cys392, Cys397, Cys400, His404, Cys409, Cys445, and Cys448. An IBR-type zinc finger spans residues 349–409; that stretch reads QRFLDLGVSI…CKAIHERMNC (61 aa). The RING-type 2; atypical zinc finger occupies 445-474; the sequence is CPQCRIVVQKKDGCDWIRCTVCHTEICWVT. Residue Cys458 is part of the active site. Residues Cys463 and Cys466 each coordinate Zn(2+).

Belongs to the RBR family. In terms of assembly, component of the LUBAC complex (linear ubiquitin chain assembly complex) which consists of SHARPIN, RBCK1 and RNF31. LUBAC has a MW of approximately 600 kDa suggesting a heteromultimeric assembly of its subunits. Interacts with beta-I-type (PRKCB1) and zeta-type protein kinase C (PRKCZ). Interacts with UBE2L3. Interacts with IREB2 only in iron-rich conditions. Associates with the TNF-R1 signaling complex (TNF-RSC) in a stimulation-dependent manner. Interacts with EYA1, TAB2, TAB3, MAP3K7 TRAF6 and RIPK1. Interacts with IRF3. Auto-ubiquitinated. Auto-ubiquitination leads to degradation by the proteasome. In terms of processing, phosphorylated. In vitro, phosphorylation inhibits auto-ubiquitination activity. As to expression, widely expressed.

It carries out the reaction [E2 ubiquitin-conjugating enzyme]-S-ubiquitinyl-L-cysteine + [acceptor protein]-L-lysine = [E2 ubiquitin-conjugating enzyme]-L-cysteine + [acceptor protein]-N(6)-ubiquitinyl-L-lysine.. Its pathway is protein modification; protein ubiquitination. E3 ubiquitin-protein ligase, which accepts ubiquitin from specific E2 ubiquitin-conjugating enzymes, such as UBE2L3/UBCM4, and then transfers it to substrates. Functions as an E3 ligase for oxidized IREB2 and both heme and oxygen are necessary for IREB2 ubiquitination. Promotes ubiquitination of TAB2 and IRF3 and their degradation by the proteasome. Component of the LUBAC complex which conjugates linear ('Met-1'-linked) polyubiquitin chains to substrates and plays a key role in NF-kappa-B activation and regulation of inflammation. LUBAC conjugates linear polyubiquitin to IKBKG and RIPK1 and is involved in activation of the canonical NF-kappa-B and the JNK signaling pathways. Linear ubiquitination mediated by the LUBAC complex interferes with TNF-induced cell death and thereby prevents inflammation. LUBAC is recruited to the TNF-R1 signaling complex (TNF-RSC) following polyubiquitination of TNF-RSC components by BIRC2 and/or BIRC3 and to conjugate linear polyubiquitin to IKBKG and possibly other components contributing to the stability of the complex. The LUBAC complex is also involved in innate immunity by conjugating linear polyubiquitin chains at the surface of bacteria invading the cytosol to form the ubiquitin coat surrounding bacteria. LUBAC is not able to initiate formation of the bacterial ubiquitin coat, and can only promote formation of linear polyubiquitins on pre-existing ubiquitin. The bacterial ubiquitin coat acts as an 'eat-me' signal for xenophagy and promotes NF-kappa-B activation. Together with OTULIN, the LUBAC complex regulates the canonical Wnt signaling during angiogenesis. Binds polyubiquitin of different linkage types. This chain is RanBP-type and C3HC4-type zinc finger-containing protein 1 (Rbck1), found in Rattus norvegicus (Rat).